A 233-amino-acid chain; its full sequence is DNA repair protein RecO (233 aa).

The protein belongs to the RecO family.

In terms of biological role, involved in DNA repair and RecF pathway recombination. The protein is DNA repair protein RecO of Francisella philomiragia subsp. philomiragia (strain ATCC 25017 / CCUG 19701 / FSC 153 / O#319-036).